A 320-amino-acid chain; its full sequence is tRNA dimethylallyltransferase (320 aa).

16-23 is an ATP binding site; the sequence is GPTASGKT. 18 to 23 is a substrate binding site; sequence TASGKT. Interaction with substrate tRNA regions lie at residues 41-44, 165-169, and 247-252; these read DSAL, QRIQR, and RCVGYR.

Belongs to the IPP transferase family. Monomer. Mg(2+) serves as cofactor.

It catalyses the reaction adenosine(37) in tRNA + dimethylallyl diphosphate = N(6)-dimethylallyladenosine(37) in tRNA + diphosphate. Its function is as follows. Catalyzes the transfer of a dimethylallyl group onto the adenine at position 37 in tRNAs that read codons beginning with uridine, leading to the formation of N6-(dimethylallyl)adenosine (i(6)A). The polypeptide is tRNA dimethylallyltransferase (Azoarcus sp. (strain BH72)).